A 554-amino-acid polypeptide reads, in one-letter code: Afadin- and alpha-actinin-binding protein A (554 aa).

Coiled-coil stretches lie at residues 122-287 (LEYL…SQRK) and 359-449 (ENGL…AIRL). Positions 508–528 (LASSGDYSRRPSKALPITSSS) are disordered.

This sequence belongs to the ADIP family. As to quaternary structure, interacts with WRAP73.

Its subcellular location is the cell junction. The protein localises to the adherens junction. It is found in the cytoplasm. It localises to the cytoskeleton. The protein resides in the microtubule organizing center. Its subcellular location is the centrosome. The protein localises to the centriolar satellite. Belongs to an adhesion system, which plays a role in the organization of homotypic, interneuronal and heterotypic cell-cell adherens junctions (AJs). Involved in cell movement. Acts as a centrosome maturation factor, probably by maintaining the integrity of the pericentriolar material and proper microtubule nucleation at mitotic spindle poles. The function seems to implicate at least in part WRAP73; the SSX2IP:WRAP73 complex is proposed to act as regulator of spindle anchoring at the mitotic centrosome. The polypeptide is Afadin- and alpha-actinin-binding protein A (ssx2ip-a) (Xenopus laevis (African clawed frog)).